We begin with the raw amino-acid sequence, 499 residues long: Replication factor C large subunit (499 aa).

50–57 (GPPGVGKT) lines the ATP pocket. The disordered stretch occupies residues 428-499 (EAERRVEAAE…QATLFDFLKK (72 aa)). The span at 436–472 (AEEEETMEAGEPEEELEEVEEEELTEEELEEAEEEIE) shows a compositional bias: acidic residues. Over residues 473–484 (TVGKKEKPEKEK) the composition is skewed to basic and acidic residues.

It belongs to the activator 1 small subunits family. RfcL subfamily. In terms of assembly, heteromultimer composed of small subunits (RfcS) and large subunits (RfcL).

Functionally, part of the RFC clamp loader complex which loads the PCNA sliding clamp onto DNA. The protein is Replication factor C large subunit of Thermococcus kodakarensis (strain ATCC BAA-918 / JCM 12380 / KOD1) (Pyrococcus kodakaraensis (strain KOD1)).